A 446-amino-acid chain; its full sequence is Keratin, type I cytoskeletal 25 (446 aa).

Residues 1-20 (MSLRLSSGSKRSYARPSTGS) are disordered. The tract at residues 1-74 (MSLRLSSGSK…VNEGGLLSGN (74 aa)) is head. Residues 75 to 110 (EKVTMQNLNDRLASYLDNVQALQEANADLEQKIKGW) form a coil 1A region. The region spanning 75-390 (EKVTMQNLND…LLIGGDEGAC (316 aa)) is the IF rod domain. Residues 111–132 (YEKFGPGSCRGLDHDYSRYFPI) are linker 1. Residues 133–224 (IDDLKNQIIT…KNHKEEMQAL (92 aa)) are coil 1B. The tract at residues 225–247 (QCAAGGNVNVEMNAAPGVDLTVL) is linker 12. Residues 248 to 386 (LNNMRAEYEA…ETYCLLIGGD (139 aa)) form a coil 2 region. The tract at residues 387–446 (EGACKSSSYKSKDYTSGNAGNQSKDSPKAIVVKKVLEEVDQRSKILTTRLHSLEEKSQSN) is tail. Residues 394-413 (SYKSKDYTSGNAGNQSKDSP) form a disordered region. A compositionally biased stretch (polar residues) spans 400 to 410 (YTSGNAGNQSK). Phosphoserine is present on S438.

Belongs to the intermediate filament family. As to quaternary structure, heterodimer of a type I and a type II keratin. Heterodimer with type II keratin KRT5 leading to the formation of keratin intermediate filament (KIF) network. Interacts with KRT6A to form filaments.

It is found in the cytoplasm. Essential for the proper assembly of type I and type II keratin protein complexes and formation of keratin intermediate filaments in the inner root sheath (irs). Plays a role in the cytoskeleton organization. The polypeptide is Keratin, type I cytoskeletal 25 (Rattus norvegicus (Rat)).